We begin with the raw amino-acid sequence, 370 residues long: L-selectin (370 aa).

An N-terminal signal peptide occupies residues 1–28 (MLCPWKCQNAQRGLWNVFKLWVWIMLCC). Positions 29-38 (DFFAHHGTDC) are excised as a propeptide. Residues 39-333 (WTYHYSKRPM…SINEESDYNP (295 aa)) lie on the Extracellular side of the membrane. The C-type lectin domain maps to 55–155 (AFCRENYTDL…ACHKAKTALC (101 aa)). Cystine bridges form between Cys-57-Cys-155, Cys-128-Cys-147, Cys-128-Cys-160, Cys-160-Cys-171, Cys-165-Cys-180, Cys-182-Cys-191, Cys-197-Cys-241, Cys-227-Cys-254, Cys-259-Cys-303, and Cys-289-Cys-316. Asn-60, Asn-77, and Asn-104 each carry an N-linked (GlcNAc...) asparagine glycan. Ca(2+) contacts are provided by Glu-118, Asn-120, Glu-126, Asn-143, and Asp-144. The EGF-like domain maps to 156-192 (YTASCKPWSCSGHGQCVEVINNYTCNCDLGYYGPECQ). N-linked (GlcNAc...) asparagine glycosylation is present at Asn-177. Sushi domains are found at residues 195–256 (TQCV…TCRV) and 257–318 (IQCE…RCQK). Asn-216, Asn-226, and Asn-246 each carry an N-linked (GlcNAc...) asparagine glycan. Asn-308 and Asn-320 each carry an N-linked (GlcNAc...) asparagine glycan. A helical membrane pass occupies residues 334-354 (LFIPVAVMVTAFSGLAFIIWL). Residues 355-370 (ARRLKRKSKKVSEKHG) lie on the Cytoplasmic side of the membrane.

Belongs to the selectin/LECAM family. Interaction with SELPLG/PSGL1 and PODXL2 is required for promoting recruitment and rolling of leukocytes. This interaction is dependent on the sialyl Lewis X glycan modification of SELPLG and PODXL2, and tyrosine sulfation modifications of SELPLG. Sulfation on 'Tyr-51' of SELPLG is important for L-selectin binding. N-glycosylated. Highly expressed in lymphocytes from peripheral lymph nodes. Low in lymphocytes isolated from Peyer patches.

The protein localises to the cell membrane. Functionally, calcium-dependent lectin that mediates cell adhesion by binding to glycoproteins on neighboring cells. Mediates the adherence of lymphocytes to endothelial cells of high endothelial venules in peripheral lymph nodes. Promotes initial tethering and rolling of leukocytes in endothelia. This is L-selectin (SELL) from Bos taurus (Bovine).